The chain runs to 152 residues: Membrane-spanning 4-domains subfamily A member 13 (152 aa).

The next 4 helical transmembrane spans lie at 1-21 (MIGIFHIFMWYFLLVLYMGQI), 32-52 (TYKTGCTLWGIFFIIAGVFLI), 66-86 (TLIINIICIITTITAVTLTII), and 111-131 (ILLFFYGLEFSIALTHSIYSC).

Belongs to the MS4A family.

It is found in the membrane. In terms of biological role, may be involved in signal transduction as a component of a multimeric receptor complex. The protein is Membrane-spanning 4-domains subfamily A member 13 (MS4A13) of Homo sapiens (Human).